The sequence spans 314 residues: MKGKEEREREGGGGAVGPGAAGPGAGGGSPEKSHSAQEHKEQGNRLFGGRKYPEAAAAYGRAINRNPLVAVYYTNRALCYLKMQQHDKALADCKRALELDGQSVKAHFFLGQCQMEMENYDEAIANLQRAYNLAKEQRLNFGDDIPSALRIAKKKRWNSIEEKRINQENELHSYLTRLIMAEKERELAECRKAQQEENVDESRGRVQLAGIEAKHDKYLADMDELFSQVDEKRKKRDIPDYLCGKISFELMREPCITPSGITYDRKDIEEHLQRVGHFDPVTRSPLTQDQLIPNLAMKEVIDAFISENGWVEDY.

The segment covering 1-11 (MKGKEEREREG) has biased composition (basic and acidic residues). A disordered region spans residues 1–47 (MKGKEEREREGGGGAVGPGAAGPGAGGGSPEKSHSAQEHKEQGNRLF). Over residues 12-29 (GGGAVGPGAAGPGAGGGS) the composition is skewed to gly residues. The span at 31–43 (EKSHSAQEHKEQG) shows a compositional bias: basic and acidic residues. TPR repeat units follow at residues 36–69 (AQEH…NPLV), 70–103 (AVYY…DGQS), and 105–137 (KAHF…AKEQ). The region spanning 237-311 (DIPDYLCGKI…DAFISENGWV (75 aa)) is the U-box domain.

Homodimer.

It localises to the cytoplasm. The protein resides in the nucleus. Its subcellular location is the mitochondrion. The enzyme catalyses S-ubiquitinyl-[E2 ubiquitin-conjugating enzyme]-L-cysteine + [acceptor protein]-L-lysine = [E2 ubiquitin-conjugating enzyme]-L-cysteine + N(6)-ubiquitinyl-[acceptor protein]-L-lysine.. Its function is as follows. E3 ubiquitin-protein ligase which targets misfolded chaperone substrates towards proteasomal degradation. Collaborates with ATXN3 in the degradation of misfolded chaperone substrates: ATXN3 restricting the length of ubiquitin chain attached to STUB1/CHIP substrates and preventing further chain extension. The sequence is that of E3 ubiquitin-protein ligase CHIP from Gallus gallus (Chicken).